Consider the following 551-residue polypeptide: DEAD-box ATP-dependent RNA helicase 47, mitochondrial (551 aa).

The N-terminal 29 residues, 1-29 (MAASTSTRFLVLLKDFSAFRKISWTCAAT), are a transit peptide targeting the mitochondrion. A Q motif motif is present at residues 110–138 (KSFEELGLPDSLLDSLEREGFSVPTDVQS). The Helicase ATP-binding domain occupies 141-340 (VPAIIKGHDA…KSWSHEPVLV (200 aa)). Residue 154-161 (SYTGSGKT) participates in ATP binding. Positions 274 to 277 (DEVD) match the DEAD box motif. Positions 397–548 (TLRRCVHALD…ELVVTEEDKA (152 aa)) constitute a Helicase C-terminal domain.

Belongs to the DEAD box helicase family. In terms of tissue distribution, mostly expressed in leaves and flowers, and, to a lower extent, in roots, seedlings and siliques, especially in meristematic regions.

It localises to the mitochondrion. The enzyme catalyses ATP + H2O = ADP + phosphate + H(+). Functionally, essential protein required during embryogenesis. Required for mitochondrial metabolism. Necessary for normal plasmodesmata (PD) development and aperture regulation. In Arabidopsis thaliana (Mouse-ear cress), this protein is DEAD-box ATP-dependent RNA helicase 47, mitochondrial (RH47).